We begin with the raw amino-acid sequence, 232 residues long: Golgi SNAP receptor complex member 1 (232 aa).

Residues Met-1–Asp-211 are Cytoplasmic-facing. 2 coiled-coil regions span residues Tyr-6–Lys-23 and Gly-52–Leu-80. The chain crosses the membrane as a helical; Anchor for type IV membrane protein span at residues Ser-212–Asn-232.

It belongs to the GOSR1 family. As to quaternary structure, component of several multiprotein Golgi SNARE complexes.

The protein localises to the golgi apparatus membrane. Its function is as follows. Involved in transport from the ER to the Golgi apparatus as well as in intra-Golgi transport. It belongs to a super-family of proteins called t-SNAREs or soluble NSF (N-ethylmaleimide-sensitive factor) attachment protein receptor. The sequence is that of Golgi SNAP receptor complex member 1 (Gos28) from Drosophila melanogaster (Fruit fly).